Reading from the N-terminus, the 103-residue chain is Large ribosomal subunit protein bL21 (103 aa).

The protein belongs to the bacterial ribosomal protein bL21 family. In terms of assembly, part of the 50S ribosomal subunit. Contacts protein L20.

Its function is as follows. This protein binds to 23S rRNA in the presence of protein L20. The chain is Large ribosomal subunit protein bL21 from Vibrio atlanticus (strain LGP32) (Vibrio splendidus (strain Mel32)).